Reading from the N-terminus, the 142-residue chain is Transcriptional regulator MraZ (142 aa).

2 SpoVT-AbrB domains span residues 5–51 and 77–120; these read ASSL…PRPE and AMDV…DKAT.

This sequence belongs to the MraZ family. As to quaternary structure, forms oligomers.

The protein resides in the cytoplasm. The protein localises to the nucleoid. The polypeptide is Transcriptional regulator MraZ (Variovorax paradoxus (strain S110)).